Reading from the N-terminus, the 267-residue chain is Mlc titration factor A (267 aa).

Positions 111, 148, 152, and 211 each coordinate Zn(2+).

Belongs to the MtfA family. In terms of assembly, interacts with Mlc. It depends on Zn(2+) as a cofactor.

It is found in the cytoplasm. Involved in the modulation of the activity of the glucose-phosphotransferase system (glucose-PTS). Interacts with the transcriptional repressor Mlc, preventing its interaction with DNA and leading to the modulation of expression of genes regulated by Mlc, including ptsG, which encodes the PTS system glucose-specific EIICB component. In terms of biological role, shows zinc-dependent metallopeptidase activity. The protein is Mlc titration factor A of Yersinia enterocolitica serotype O:8 / biotype 1B (strain NCTC 13174 / 8081).